The chain runs to 584 residues: Tyrosine-protein kinase Dnt (584 aa).

The first 40 residues, 1–40 (MESVNKCGKSASTRNCTVKMSRKMWVLSLLALAALQLHSG), serve as a signal peptide directing secretion. Residues 41–208 (SEVAAHLNVF…LETVMLPPTG (168 aa)) are Extracellular-facing. The WIF domain maps to 49–180 (VFLNPVEVMR…HLVFRRKKIC (132 aa)). N-linked (GlcNAc...) asparagine glycosylation is found at asparagine 124, asparagine 163, asparagine 168, and asparagine 183. The helical transmembrane segment at 209 to 229 (LITLVVGVSVAMGSVCLLLMI) threads the bilayer. The Cytoplasmic portion of the chain corresponds to 230–584 (AYCVKGAANK…EFYSQITRYV (355 aa)). Residues 241–261 (QHHQHGGQPMRTSSFQRLNTH) are disordered. The segment covering 250–261 (MRTSSFQRLNTH) has biased composition (polar residues). The Protein kinase domain maps to 317 to 577 (VRLSSLLQEG…QLQSCLSEFY (261 aa)). ATP contacts are provided by residues 323–331 (LQEGTFGRV) and lysine 345. The active-site Proton acceptor is aspartate 442. Phosphotyrosine; by autocatalysis is present on tyrosine 472.

This sequence belongs to the protein kinase superfamily. Tyr protein kinase family. Expressed in dynamic domains in the embryonic epidermis, many of which border on sites of epithelial invagination into the embryo interior, including ventral furrow, cephalic furrow, fore- and hindgut, optic lobe and tracheal pits. Later in embryogenesis, expression is seen in imaginal tissues.

The protein resides in the cell membrane. It catalyses the reaction L-tyrosyl-[protein] + ATP = O-phospho-L-tyrosyl-[protein] + ADP + H(+). Functionally, may play an essential role in neuronal pathway recognition and ventral muscle attachment site selection. The chain is Tyrosine-protein kinase Dnt (dnt) from Drosophila melanogaster (Fruit fly).